A 349-amino-acid polypeptide reads, in one-letter code: Protein-arginine kinase (349 aa).

Residues 24–252 (IVLSSRIRLA…SQIIEQERQA (229 aa)) form the Phosphagen kinase C-terminal domain. ATP contacts are provided by residues 27–31 (SSRIR), H89, R123, 174–178 (RASVM), and 205–210 (RGIYGE). The short motif at 335–340 (RDIKRA) is the RDXXRA motif of the pArg binding pocket involved in allosteric regulation element.

It belongs to the ATP:guanido phosphotransferase family.

The enzyme catalyses L-arginyl-[protein] + ATP = N(omega)-phospho-L-arginyl-[protein] + ADP + H(+). Its activity is regulated as follows. Appears to be allosterically activated by the binding of pArg-containing polypeptides to the pArg-binding pocket localized in the C-terminal domain of McsB. Catalyzes the specific phosphorylation of arginine residues in proteins. The protein is Protein-arginine kinase of Halothermothrix orenii (strain H 168 / OCM 544 / DSM 9562).